The sequence spans 179 residues: ATP-dependent protease subunit HslV (179 aa).

T7 is a catalytic residue. Residues G162, C165, and T168 each coordinate Na(+).

It belongs to the peptidase T1B family. HslV subfamily. As to quaternary structure, a double ring-shaped homohexamer of HslV is capped on each side by a ring-shaped HslU homohexamer. The assembly of the HslU/HslV complex is dependent on binding of ATP.

The protein localises to the cytoplasm. The enzyme catalyses ATP-dependent cleavage of peptide bonds with broad specificity.. With respect to regulation, allosterically activated by HslU binding. In terms of biological role, protease subunit of a proteasome-like degradation complex believed to be a general protein degrading machinery. The protein is ATP-dependent protease subunit HslV of Bordetella pertussis (strain Tohama I / ATCC BAA-589 / NCTC 13251).